The chain runs to 397 residues: Xyloglucan O-acetyltransferase 3 (397 aa).

Over 1 to 3 (MNR) the chain is Cytoplasmic. The chain crosses the membrane as a helical; Signal-anchor for type II membrane protein span at residues 4 to 24 (FFYTVGLIFLFSFFILYSPKT). At 25-397 (SDLSNNVDLH…RHAFTDFTWS (373 aa)) the chain is on the lumenal side. Disulfide bonds link Cys-48–Cys-98, Cys-69–Cys-134, Cys-78–Cys-370, and Cys-293–Cys-366. An N-linked (GlcNAc...) asparagine glycan is attached at Asn-66. A GDS motif motif is present at residues 121–123 (GDS). Ser-123 acts as the Nucleophile in catalysis. N-linked (GlcNAc...) asparagine glycosylation is found at Asn-162, Asn-182, and Asn-294. The Proton donor role is filled by Asp-365. The DXXH motif signature appears at 365-368 (DCVH). Residue His-368 is the Proton acceptor of the active site.

The protein belongs to the PC-esterase family. TBL subfamily.

It localises to the golgi apparatus membrane. Xyloglucan acetyltransferase that catalyzes the acetylation of fucosylated Gal residues on xyloglucan side chains. Predominantly catalyze 6-O-monoacetylation of Gal residues in the Fuc-Gal-Xyl trisaccharide side chains of xyloglucan oligomers. This Populus trichocarpa (Western balsam poplar) protein is Xyloglucan O-acetyltransferase 3.